The following is a 257-amino-acid chain: 1-(5-phosphoribosyl)-5-[(5-phosphoribosylamino)methylideneamino] imidazole-4-carboxamide isomerase (257 aa).

The Proton acceptor role is filled by D8. Catalysis depends on D129, which acts as the Proton donor.

It belongs to the HisA/HisF family.

It is found in the cytoplasm. It carries out the reaction 1-(5-phospho-beta-D-ribosyl)-5-[(5-phospho-beta-D-ribosylamino)methylideneamino]imidazole-4-carboxamide = 5-[(5-phospho-1-deoxy-D-ribulos-1-ylimino)methylamino]-1-(5-phospho-beta-D-ribosyl)imidazole-4-carboxamide. It functions in the pathway amino-acid biosynthesis; L-histidine biosynthesis; L-histidine from 5-phospho-alpha-D-ribose 1-diphosphate: step 4/9. The sequence is that of 1-(5-phosphoribosyl)-5-[(5-phosphoribosylamino)methylideneamino] imidazole-4-carboxamide isomerase from Trichodesmium erythraeum (strain IMS101).